The sequence spans 470 residues: FAD-dependent monooxygenase dpchE (470 aa).

Residues 1-24 form the signal peptide; it reads MSEPHFKVIIVGGSITGLTLAHSL. FAD-binding residues include Glu-35, Gly-49, and Arg-108. N-linked (GlcNAc...) asparagine glycosylation is present at Asn-128. Arg-193 is a catalytic residue. 2 residues coordinate FAD: Asp-312 and Ala-325. Residues 447–463 form a helical membrane-spanning segment; it reads WAVVSRSVLLLVGLAIL.

This sequence belongs to the paxM FAD-dependent monooxygenase family. Requires FAD as cofactor.

The protein resides in the membrane. It participates in secondary metabolite biosynthesis; terpenoid biosynthesis. Functionally, FAD-dependent monooxygenase; part of the gene cluster that mediates the biosynthesis of the diterpenoid pyrones higginsianins A and B. The first step of the pathway is the synthesis of the alpha-pyrone moiety by the polyketide synthase dpchA via condensation of one acetyl-CoA starter unit with 3 malonyl-CoA units and 2 methylations. The alpha-pyrone is then combined with geranylgeranyl pyrophosphate (GGPP) formed by the GGPP synthase dpchD through the action of the prenyltransferase dpchC to yield a linear alpha-pyrone diterpenoid. Subsequent steps in the diterpenoid pyrone biosynthetic pathway involve the decalin core formation, which is initiated by the epoxidation of the C10-C11 olefin by the FAD-dependent oxidoreductase dpchE, and is followed by a cyclization cascade catalyzed by the terpene cyclase dpchB. The short chain dehydrogenase/reductase dpchG then oxidizes the 8S hydroxy group to a ketone and the short chain dehydrogenase/reductase dpchH reduces the ketone to the 8R hydroxy group to yield higginsianin B. Finally, the FAD-dependent oxidoreductase dpchF converts higginsianin B into higginsianin A. This Colletotrichum higginsianum (strain IMI 349063) (Crucifer anthracnose fungus) protein is FAD-dependent monooxygenase dpchE.